A 247-amino-acid polypeptide reads, in one-letter code: MRRGFGPLALTLFLFFFALLTLPGDGNQGSVAGSCYCDRTIPSGTQIPPATLNHMRKYLKTFHRCQFFIRFQLQSKSVCGGSQDQWVRELVNCFEHKQCGIGHGQSFHHQKHVPQASTRIPEATEGKPPDTSTAVQFQSTQQSTFPSGAPSLNKELTRHWETTILPSGYGLEARPVAEANEKQHKQQKEPGAGAGTQALVPVLSLLAIVFFLVAAMVCVLCNRRVTRQSSSGLQLCYTPVEPRPQGL.

The first 26 residues, 1–26, serve as a signal peptide directing secretion; it reads MRRGFGPLALTLFLFFFALLTLPGDG. The Extracellular portion of the chain corresponds to 27 to 198; that stretch reads NQGSVAGSCY…EPGAGAGTQA (172 aa). 2 disulfide bridges follow: C35–C65 and C37–C79. A disordered region spans residues 120–152; it reads IPEATEGKPPDTSTAVQFQSTQQSTFPSGAPSL. Residues 131-147 are compositionally biased toward low complexity; sequence TSTAVQFQSTQQSTFPS. A helical transmembrane segment spans residues 199–219; that stretch reads LVPVLSLLAIVFFLVAAMVCV. Residues 220 to 247 lie on the Cytoplasmic side of the membrane; it reads LCNRRVTRQSSSGLQLCYTPVEPRPQGL.

It belongs to the intercrine alpha (chemokine CxC) family. In terms of processing, glycosylated.

It is found in the membrane. Induces a strong chemotactic response. Induces calcium mobilization. Binds to CXCR6/Bonzo. Also acts as a scavenger receptor on macrophages, which specifically binds to OxLDL (oxidized low density lipoprotein), suggesting that it may be involved in pathophysiology such as atherogenesis. The chain is C-X-C motif chemokine 16 (Cxcl16) from Rattus norvegicus (Rat).